The primary structure comprises 227 residues: Pectinesterase inhibitor 28 (227 aa).

Residues 1 to 25 (MASSMAPAAAMAILLLALLMPATLC) form the signal peptide. Residues 28–50 (SGPPSSKHGHGGHAKRAPPPASP) are disordered. Residues 34–43 (KHGHGGHAKR) show a composition bias toward basic residues. Cys-66 and Cys-75 are joined by a disulfide. N-linked (GlcNAc...) asparagine glycosylation is found at Asn-67, Asn-104, and Asn-117. Cys-139 and Cys-179 are oxidised to a cystine.

This sequence belongs to the PMEI family. Expressed in roots, leaves, culms and flag leaves.

The protein resides in the secreted. It is found in the extracellular space. Its subcellular location is the apoplast. Its function is as follows. Pectin methylesterase (PME) inhibitor that inhibits PME in vitro. Functions as a critical structural modulator by regulating the degree of pectin methylesterification and the physiochemical properties of the cell wall components. The protein is Pectinesterase inhibitor 28 of Oryza sativa subsp. japonica (Rice).